Here is a 116-residue protein sequence, read N- to C-terminus: Putative gamma-glutamylcyclotransferase PH0828 (116 aa).

Position 13 to 16 (13 to 16 (YGTL)) interacts with substrate. Glutamate 76 serves as the catalytic Proton acceptor.

Belongs to the gamma-glutamylcyclotransferase family.

Putative gamma-glutamylcyclotransferase. In Pyrococcus horikoshii (strain ATCC 700860 / DSM 12428 / JCM 9974 / NBRC 100139 / OT-3), this protein is Putative gamma-glutamylcyclotransferase PH0828.